A 216-amino-acid chain; its full sequence is ATP phosphoribosyltransferase (216 aa).

The protein belongs to the ATP phosphoribosyltransferase family. Short subfamily. In terms of assembly, heteromultimer composed of HisG and HisZ subunits.

It localises to the cytoplasm. It carries out the reaction 1-(5-phospho-beta-D-ribosyl)-ATP + diphosphate = 5-phospho-alpha-D-ribose 1-diphosphate + ATP. It functions in the pathway amino-acid biosynthesis; L-histidine biosynthesis; L-histidine from 5-phospho-alpha-D-ribose 1-diphosphate: step 1/9. In terms of biological role, catalyzes the condensation of ATP and 5-phosphoribose 1-diphosphate to form N'-(5'-phosphoribosyl)-ATP (PR-ATP). Has a crucial role in the pathway because the rate of histidine biosynthesis seems to be controlled primarily by regulation of HisG enzymatic activity. The chain is ATP phosphoribosyltransferase from Rubrobacter xylanophilus (strain DSM 9941 / JCM 11954 / NBRC 16129 / PRD-1).